A 181-amino-acid polypeptide reads, in one-letter code: Oligoribonuclease (181 aa).

Positions 8 to 171 (LVWLDMEMTG…ADIYESIDEL (164 aa)) constitute an Exonuclease domain. The active site involves Y129.

This sequence belongs to the oligoribonuclease family.

Its subcellular location is the cytoplasm. In terms of biological role, 3'-to-5' exoribonuclease specific for small oligoribonucleotides. The chain is Oligoribonuclease from Bordetella bronchiseptica (strain ATCC BAA-588 / NCTC 13252 / RB50) (Alcaligenes bronchisepticus).